The primary structure comprises 281 residues: HTH-type transcriptional activator RhaR (281 aa).

The HTH araC/xylS-type domain maps to 178 to 276 (DKLLAALAAS…GMSPGQWRQR (99 aa)). 2 consecutive DNA-binding regions (H-T-H motif) follow at residues 195–216 (ERFC…RQQT) and 243–266 (IGDI…SREI).

Binds DNA as a dimer.

The protein resides in the cytoplasm. Functionally, activates expression of the rhaSR operon in response to L-rhamnose. The sequence is that of HTH-type transcriptional activator RhaR from Klebsiella pneumoniae subsp. pneumoniae (strain ATCC 700721 / MGH 78578).